The following is a 122-amino-acid chain: Large ribosomal subunit protein uL14 (122 aa).

Belongs to the universal ribosomal protein uL14 family. Part of the 50S ribosomal subunit. Forms a cluster with proteins L3 and L19. In the 70S ribosome, L14 and L19 interact and together make contacts with the 16S rRNA in bridges B5 and B8.

In terms of biological role, binds to 23S rRNA. Forms part of two intersubunit bridges in the 70S ribosome. The chain is Large ribosomal subunit protein uL14 from Rickettsia rickettsii (strain Iowa).